Reading from the N-terminus, the 953-residue chain is MDNLLPQSRFSYFKKYPIHAIRKYLSMLRNQKEEEQVARFQKIPNAENETMIPVLTSKKASELPVSEVASILQADLQNGLNKCEVSHRRAFHGWNEFDISEDEPLWKKYISQFKNPLIMLLLASAVISVLMHQFDDAVSITVAILIVVTVAFVQEYRSEKSLEELSKLMPPECHCVREGKLEHTLARDLVPGDTVCLSVGDRVPADLRLFEAVDLSVDESSLTGETTPCSKVTAPQPAATNGDLASRSNIAFMGTLVRCGKAKGIVIGTGENSEFGEVFKMMQAEEAPKTPLQKSMDLLGKQLSFYSFGIIGIIMLVGWLLGKDILEMFTISVSLAVAAIPEGLPIVVTVTLALGVMRMVKKRAIVKKLPIVETLGCCNVICSDKTGTLTKNEMTVTHIFTSDGLRAEVTGVGYNPFGEVIVDGDVVHGFYNPSVSRIVEAGCVCNDAVIRNNTLMGKPTEGALIALAMKMGLDGLQQDYIRKAEYPFSSEQKWMAVKCVHRTQQDRPEICFMKGAYEQVIKYCTTYHSKGQTLTLTQQQRDLYQQEKAQMGSAGLRVLALASGPELGQLTFLGLVGIIDPPRTGVKEAVTTLIASGVSIKMITGDSQETAVAIASRLGLYSKTSQSVSGEEIDAMDVQQLSQIVPKVAVFYRASPRHKMKIIKSLQKNGSVVAMTGDGVNDAVALKAADIGVAMGQTGTDVCKEAADMILVDDDFQTIMSAIEEGKGIYNNIKNFVRFQLSTSIAALTLISLATLMNFPNPLNAMQILWINIIMDGPPAQSLGVEPVDKDVIRKPPRNWKDSILTKNLILKILVSSIIIVCGTLFVFWRELRDNVITPRDTTMTFTCFVFFDMFNALSSRSQTKSVFEIGLCSNKMFCYAVLGSIMGQLLVIYFPPLQKVFQTESLSILDLLFLLGLTSSVCIVAEIIKKVERSREKIQKPVSSTSSSFLEV.

Over 1-104 (MDNLLPQSRF…NEFDISEDEP (104 aa)) the chain is Cytoplasmic. Residues 105-125 (LWKKYISQFKNPLIMLLLASA) traverse the membrane as a helical segment. The Lumenal portion of the chain corresponds to 126-138 (VISVLMHQFDDAV). Residues 139-157 (SITVAILIVVTVAFVQEYR) traverse the membrane as a helical segment. The Cytoplasmic segment spans residues 158–296 (SEKSLEELSK…APKTPLQKSM (139 aa)). A helical transmembrane segment spans residues 297–316 (DLLGKQLSFYSFGIIGIIML). Topologically, residues 317 to 328 (VGWLLGKDILEM) are lumenal. The chain crosses the membrane as a helical span at residues 329–346 (FTISVSLAVAAIPEGLPI). Ca(2+) is bound by residues Val-337, Ala-338, Ile-340, and Glu-342. Topologically, residues 347–733 (VVTVTLALGV…EEGKGIYNNI (387 aa)) are cytoplasmic. Asp-384 functions as the 4-aspartylphosphate intermediate in the catalytic mechanism. Asp-678 and Asp-682 together coordinate Mg(2+). A helical membrane pass occupies residues 734 to 753 (KNFVRFQLSTSIAALTLISL). Over 754-763 (ATLMNFPNPL) the chain is Lumenal. Residues 764–784 (NAMQILWINIIMDGPPAQSLG) form a helical membrane-spanning segment. Ca(2+)-binding residues include Asn-772 and Asp-776. At 785–804 (VEPVDKDVIRKPPRNWKDSI) the chain is on the cytoplasmic side. Residues 805–824 (LTKNLILKILVSSIIIVCGT) form a helical membrane-spanning segment. Over 825-842 (LFVFWRELRDNVITPRDT) the chain is Lumenal. A helical transmembrane segment spans residues 843 to 862 (TMTFTCFVFFDMFNALSSRS). Over 863–875 (QTKSVFEIGLCSN) the chain is Cytoplasmic. The helical transmembrane segment at 876–894 (KMFCYAVLGSIMGQLLVIY) threads the bilayer. At 895-909 (FPPLQKVFQTESLSI) the chain is on the lumenal side. A helical transmembrane segment spans residues 910–930 (LDLLFLLGLTSSVCIVAEIIK). Over 931 to 953 (KVERSREKIQKPVSSTSSSFLEV) the chain is Cytoplasmic.

Belongs to the cation transport ATPase (P-type) (TC 3.A.3) family. Type IIA subfamily. As to quaternary structure, monomer. Homodimer.

It localises to the golgi apparatus. Its subcellular location is the trans-Golgi network membrane. The protein resides in the golgi stack membrane. The catalysed reaction is Ca(2+)(in) + ATP + H2O = Ca(2+)(out) + ADP + phosphate + H(+). It carries out the reaction Mn(2+)(in) + ATP + H2O = Mn(2+)(out) + ADP + phosphate + H(+). In terms of biological role, ATP-driven pump that supplies the Golgi apparatus with Ca(2+) and Mn(2+) ions, both essential cofactors for processing and trafficking of newly synthesized proteins in the secretory pathway. Within a catalytic cycle, acquires Ca(2+) or Mn(2+) ions on the cytoplasmic side of the membrane and delivers them to the lumenal side. The transfer of ions across the membrane is coupled to ATP hydrolysis and is associated with a transient phosphorylation that shifts the pump conformation from inward-facing to outward-facing state. Plays a primary role in the maintenance of Ca(2+) homeostasis in the trans-Golgi compartment with a functional impact on Golgi and post-Golgi protein sorting as well as a structural impact on cisternae morphology. Responsible for loading the Golgi stores with Ca(2+) ions in keratinocytes, contributing to keratinocyte differentiation and epidermis integrity. Participates in Ca(2+) and Mn(2+) ions uptake into the Golgi store of hippocampal neurons and regulates protein trafficking required for neural polarity. May also play a role in the maintenance of Ca(2+) and Mn(2+) homeostasis and signaling in the cytosol while preventing cytotoxicity. The protein is Calcium-transporting ATPase type 2C member 1 (ATP2C1) of Bos taurus (Bovine).